Here is a 278-residue protein sequence, read N- to C-terminus: Large ribosomal subunit protein uL2 (278 aa).

The tract at residues 201 to 278 (HGNINDGKAG…IMRSRHQRKK (78 aa)) is disordered. Over residues 210–221 (GRSRWRGKRPHV) the composition is skewed to basic residues.

It belongs to the universal ribosomal protein uL2 family. Part of the 50S ribosomal subunit. Forms a bridge to the 30S subunit in the 70S ribosome.

In terms of biological role, one of the primary rRNA binding proteins. Required for association of the 30S and 50S subunits to form the 70S ribosome, for tRNA binding and peptide bond formation. It has been suggested to have peptidyltransferase activity; this is somewhat controversial. Makes several contacts with the 16S rRNA in the 70S ribosome. The polypeptide is Large ribosomal subunit protein uL2 (Sinorhizobium fredii (strain NBRC 101917 / NGR234)).